A 296-amino-acid polypeptide reads, in one-letter code: 4-hydroxybenzoate octaprenyltransferase (296 aa).

8 helical membrane-spanning segments follow: residues 28–48, 52–72, 102–122, 145–167, 174–196, 219–239, 241–261, and 275–295; these read PIGI…AGLG, LANV…GCCI, ALAL…CTNS, TYYP…FTAA, SAWL…YAMV, MIIL…GSRF, LGGW…WEYW, and FLHN…DYAL.

The protein belongs to the UbiA prenyltransferase family. It depends on Mg(2+) as a cofactor.

The protein localises to the cell inner membrane. The enzyme catalyses all-trans-octaprenyl diphosphate + 4-hydroxybenzoate = 4-hydroxy-3-(all-trans-octaprenyl)benzoate + diphosphate. It functions in the pathway cofactor biosynthesis; ubiquinone biosynthesis. Functionally, catalyzes the prenylation of para-hydroxybenzoate (PHB) with an all-trans polyprenyl group. Mediates the second step in the final reaction sequence of ubiquinone-8 (UQ-8) biosynthesis, which is the condensation of the polyisoprenoid side chain with PHB, generating the first membrane-bound Q intermediate 3-octaprenyl-4-hydroxybenzoate. In Pseudomonas putida (strain W619), this protein is 4-hydroxybenzoate octaprenyltransferase.